A 266-amino-acid chain; its full sequence is Probable phosphoadenosine phosphosulfate reductase (266 aa).

The disordered stretch occupies residues 219 to 246 (TQPVREGEDERAGRWRGREKTECGLHSH). A compositionally biased stretch (basic and acidic residues) spans 223-243 (REGEDERAGRWRGREKTECGL).

This sequence belongs to the PAPS reductase family. CysH subfamily.

The protein localises to the cytoplasm. The protein resides in the nucleus. It catalyses the reaction [thioredoxin]-disulfide + sulfite + adenosine 3',5'-bisphosphate + 2 H(+) = [thioredoxin]-dithiol + 3'-phosphoadenylyl sulfate. It functions in the pathway sulfur metabolism; hydrogen sulfide biosynthesis; sulfite from sulfate: step 3/3. In terms of biological role, the NADP dependent reduction of PAPS into sulfite involves thioredoxin which probably plays the role of a thiol carrier. Required for methionine synthesis. This Schizosaccharomyces pombe (strain 972 / ATCC 24843) (Fission yeast) protein is Probable phosphoadenosine phosphosulfate reductase (met16).